The sequence spans 746 residues: Polyribonucleotide nucleotidyltransferase (746 aa).

Positions 493 and 499 each coordinate Mg(2+). Positions 560–619 constitute a KH domain; it reads PRIITLQINPEKIGALIGPGGKTIRSITEATGAQIDIEEDGRVYISTADAAAAQQAVAMV. In terms of domain architecture, S1 motif spans 629–698; the sequence is GDIFLGKVVR…GTGKVSLSRR (70 aa). The segment at 704–746 is disordered; the sequence is ETAEDRRAAGAGRGLRDGGRSSGSERSGDRSPRSDDRPRPRRR. Basic and acidic residues-rich tracts occupy residues 706 to 722 and 729 to 746; these read AEDR…RDGG and RSGD…PRRR.

Belongs to the polyribonucleotide nucleotidyltransferase family. The cofactor is Mg(2+).

It is found in the cytoplasm. The catalysed reaction is RNA(n+1) + phosphate = RNA(n) + a ribonucleoside 5'-diphosphate. Functionally, involved in mRNA degradation. Catalyzes the phosphorolysis of single-stranded polyribonucleotides processively in the 3'- to 5'-direction. The chain is Polyribonucleotide nucleotidyltransferase from Roseiflexus castenholzii (strain DSM 13941 / HLO8).